The following is a 512-amino-acid chain: Glycine betaine transporter OpuD (512 aa).

Helical transmembrane passes span 5-25 (ISSV…WGVI), 45-65 (FGWY…FLIF), 82-102 (FGLL…GLVF), 135-155 (FFHW…CIAY), 186-206 (IDCI…GLGA), 222-242 (AFIV…LSAW), 257-277 (MVLA…VLIM), 312-332 (WTIF…IFIA), 343-363 (FLIG…SIFG), 395-415 (LTMV…ITSA), 441-461 (WGII…LAAL), and 464-484 (TAIL…ASLY).

This sequence belongs to the BCCT transporter (TC 2.A.15) family.

It is found in the cell membrane. Activity is stimulated by high osmolarity. Functionally, high-affinity uptake of glycine betaine. Does not mediate either carnitine or choline uptake. This is Glycine betaine transporter OpuD (opuD) from Bacillus subtilis (strain 168).